Reading from the N-terminus, the 249-residue chain is DNA polymerase sliding clamp (249 aa).

Belongs to the PCNA family. Homotrimer. The subunits circularize to form a toroid; DNA passes through its center. Replication factor C (RFC) is required to load the toroid on the DNA.

Sliding clamp subunit that acts as a moving platform for DNA processing. Responsible for tethering the catalytic subunit of DNA polymerase and other proteins to DNA during high-speed replication. In Thermococcus gammatolerans (strain DSM 15229 / JCM 11827 / EJ3), this protein is DNA polymerase sliding clamp.